Here is a 197-residue protein sequence, read N- to C-terminus: Double homeobox protein 5 (197 aa).

DNA-binding regions (homeobox) lie at residues 46–105 (GRRM…LRQH) and 121–180 (GRRK…RGQS). The disordered stretch occupies residues 101 to 127 (QLRQHRRQSRPWPGRRDPQKGRRKRTA).

The protein belongs to the paired homeobox family. Expressed in hepatoma Hep3B cells.

Its subcellular location is the nucleus. The chain is Double homeobox protein 5 (DUX5) from Homo sapiens (Human).